A 495-amino-acid polypeptide reads, in one-letter code: Glutamyl-tRNA(Gln) amidotransferase subunit A (495 aa).

Active-site charge relay system residues include lysine 75 and serine 150. Serine 174 functions as the Acyl-ester intermediate in the catalytic mechanism.

Belongs to the amidase family. GatA subfamily. As to quaternary structure, heterotrimer of A, B and C subunits.

It catalyses the reaction L-glutamyl-tRNA(Gln) + L-glutamine + ATP + H2O = L-glutaminyl-tRNA(Gln) + L-glutamate + ADP + phosphate + H(+). Functionally, allows the formation of correctly charged Gln-tRNA(Gln) through the transamidation of misacylated Glu-tRNA(Gln) in organisms which lack glutaminyl-tRNA synthetase. The reaction takes place in the presence of glutamine and ATP through an activated gamma-phospho-Glu-tRNA(Gln). In Paraburkholderia phytofirmans (strain DSM 17436 / LMG 22146 / PsJN) (Burkholderia phytofirmans), this protein is Glutamyl-tRNA(Gln) amidotransferase subunit A.